The primary structure comprises 548 residues: Glucose-6-phosphate isomerase 1 (548 aa).

E353 functions as the Proton donor in the catalytic mechanism. Active-site residues include H384 and K512.

Belongs to the GPI family.

The protein localises to the cytoplasm. The enzyme catalyses alpha-D-glucose 6-phosphate = beta-D-fructose 6-phosphate. It functions in the pathway carbohydrate biosynthesis; gluconeogenesis. It participates in carbohydrate degradation; glycolysis; D-glyceraldehyde 3-phosphate and glycerone phosphate from D-glucose: step 2/4. Functionally, catalyzes the reversible isomerization of glucose-6-phosphate to fructose-6-phosphate. This is Glucose-6-phosphate isomerase 1 from Neisseria meningitidis serogroup A / serotype 4A (strain DSM 15465 / Z2491).